The primary structure comprises 119 residues: DNA-binding protein inhibitor ID-3 (119 aa).

In terms of domain architecture, bHLH spans 28-80 (RGKSPSAEEPLSLLDDMNHCYSRLRELVPGVPRGTQLSQVEILQRVIDYILDL).

As to quaternary structure, homodimer, and heterodimer with other HLH proteins. Interacts with COPS5 and COPS7A. Interacts with IFI204. Interacts with GATA4 and NKX2-5. Interacts with ANKRD2; both proteins cooperate in myoblast differentiation. Interacts with CLOCK and BMAL1. In terms of processing, phosphorylated in vitro by CDC2 and PKC.

It localises to the nucleus. Functionally, transcriptional regulator (lacking a basic DNA binding domain) which negatively regulates the basic helix-loop-helix (bHLH) transcription factors by forming heterodimers and inhibiting their DNA binding and transcriptional activity. Implicated in regulating a variety of cellular processes, including cellular growth, senescence, differentiation, apoptosis, angiogenesis, and neoplastic transformation. Involved in myogenesis by inhibiting skeletal muscle and cardiac myocyte differentiation and promoting muscle precursor cells proliferation. Inhibits the binding of E2A-containing protein complexes to muscle creatine kinase E-box enhancer. Regulates the circadian clock by repressing the transcriptional activator activity of the CLOCK-BMAL1 heterodimer. The chain is DNA-binding protein inhibitor ID-3 (Id3) from Rattus norvegicus (Rat).